The sequence spans 230 residues: Prolactin-3D1 (230 aa).

The first 29 residues, 1 to 29, serve as a signal peptide directing secretion; it reads MQLTLTLSRASGMQLFLLVSSLLLWEKVA. 2 cysteine pairs are disulfide-bonded: C81–C200 and C217–C225. N109 and N158 each carry an N-linked (GlcNAc...) asparagine glycan.

It belongs to the somatotropin/prolactin family.

The protein localises to the secreted. This Rattus norvegicus (Rat) protein is Prolactin-3D1 (Prl3d1).